We begin with the raw amino-acid sequence, 385 residues long: Glucans biosynthesis protein C (385 aa).

Transmembrane regions (helical) follow at residues 17-37 (AWLM…SHTW), 60-80 (MLVF…RYPL), 91-111 (VGIP…IMLQ), 137-157 (ISHL…VWIF), 173-193 (KFSM…YAVI), 212-232 (FIVM…LAFI), 239-259 (LFTT…VAYL), 274-294 (TESV…FSFG), 311-331 (ASLF…AYIT), and 338-358 (WLGF…LYEI).

The protein belongs to the acyltransferase 3 family. OpgC subfamily.

Its subcellular location is the cell membrane. It functions in the pathway glycan metabolism; osmoregulated periplasmic glucan (OPG) biosynthesis. Its function is as follows. Necessary for the succinyl substitution of periplasmic glucans. Could catalyze the transfer of succinyl residues from the cytoplasmic side of the membrane to the nascent glucan backbones on the periplasmic side of the membrane. The sequence is that of Glucans biosynthesis protein C from Shigella boydii serotype 4 (strain Sb227).